We begin with the raw amino-acid sequence, 104 residues long: Translation initiation factor 1A (104 aa).

The segment covering 1–14 (MRGQQAPPQQPTRV) has biased composition (low complexity). A disordered region spans residues 1–20 (MRGQQAPPQQPTRVRTPREN). An S1-like domain is found at 12–87 (TRVRTPRENE…EKCDVIWRYT (76 aa)).

This sequence belongs to the eIF-1A family.

Seems to be required for maximal rate of protein biosynthesis. Enhances ribosome dissociation into subunits and stabilizes the binding of the initiator Met-tRNA(I) to 40 S ribosomal subunits. The protein is Translation initiation factor 1A (eIF1A) of Methanococcus maripaludis (strain C6 / ATCC BAA-1332).